Reading from the N-terminus, the 225-residue chain is Ribonuclease HII (225 aa).

Positions 35-225 (GLVAGVDEVG…SFRPCQISLD (191 aa)) constitute an RNase H type-2 domain. The a divalent metal cation site is built by D41, E42, and D137.

It belongs to the RNase HII family. It depends on Mn(2+) as a cofactor. Requires Mg(2+) as cofactor.

The protein resides in the cytoplasm. The catalysed reaction is Endonucleolytic cleavage to 5'-phosphomonoester.. Endonuclease that specifically degrades the RNA of RNA-DNA hybrids. This chain is Ribonuclease HII, found in Trichormus variabilis (strain ATCC 29413 / PCC 7937) (Anabaena variabilis).